The following is a 186-amino-acid chain: Peptidyl-tRNA hydrolase (186 aa).

A tRNA-binding site is contributed by Tyr-14. His-19 serves as the catalytic Proton acceptor. Residues Tyr-61, Asn-63, and Asn-107 each contribute to the tRNA site.

This sequence belongs to the PTH family. As to quaternary structure, monomer.

The protein localises to the cytoplasm. The enzyme catalyses an N-acyl-L-alpha-aminoacyl-tRNA + H2O = an N-acyl-L-amino acid + a tRNA + H(+). Functionally, hydrolyzes ribosome-free peptidyl-tRNAs (with 1 or more amino acids incorporated), which drop off the ribosome during protein synthesis, or as a result of ribosome stalling. Its function is as follows. Catalyzes the release of premature peptidyl moieties from peptidyl-tRNA molecules trapped in stalled 50S ribosomal subunits, and thus maintains levels of free tRNAs and 50S ribosomes. In Helicobacter acinonychis (strain Sheeba), this protein is Peptidyl-tRNA hydrolase.